The chain runs to 184 residues: Dual specificity protein phosphatase 22 (184 aa).

Glycine 2 is lipidated: N-myristoyl glycine. One can recognise a Tyrosine-protein phosphatase domain in the interval 4 to 144; it reads GMNKILPGLY…LQEFEKHEVH (141 aa). Serine 58 is subject to Phosphoserine. The active-site Phosphocysteine intermediate is cysteine 88. Leucine 89, alanine 90, valine 92, serine 93, and arginine 94 together coordinate a protein.

The protein belongs to the protein-tyrosine phosphatase family. Non-receptor class dual specificity subfamily. In terms of assembly, monomer. Interacts with LCK; the interaction is direct. Interacts with UBR2; the interaction is direct. Myristoylation regulates subcellular location, and is necessary for activation of JNK. In terms of tissue distribution, ubiquitous. Highest expression seen in heart, placenta, lung, liver, kidney and pancreas.

It is found in the cytoplasm. The enzyme catalyses O-phospho-L-tyrosyl-[protein] + H2O = L-tyrosyl-[protein] + phosphate. It catalyses the reaction O-phospho-L-seryl-[protein] + H2O = L-seryl-[protein] + phosphate. It carries out the reaction O-phospho-L-threonyl-[protein] + H2O = L-threonyl-[protein] + phosphate. Functionally, dual specificity phosphatase; can dephosphorylate both phosphotyrosine and phosphoserine or phosphothreonine residues. Activates the JNK signaling pathway. Inhibits T-cell receptor signaling and T-cell mediated immune responses, acting, at least in part, by inducing degradation of E3 ubiquitin ligase UBR2. Dephosphorylates and thereby induces 'Lys-48'-linked ubiquitination of UBR2, leading to proteasomal degradation of UBR2. Dephosphorylates and thereby inactivates tyrosine kinase LCK. Inhibits UBR2-mediated 'Lys-63'-linked ubiquitination of LCK. May play a role in B-cell receptor (BCR) signaling and B-cell function. The chain is Dual specificity protein phosphatase 22 (DUSP22) from Homo sapiens (Human).